Reading from the N-terminus, the 1024-residue chain is Error-prone DNA polymerase (1024 aa).

Belongs to the DNA polymerase type-C family. DnaE2 subfamily.

It is found in the cytoplasm. The enzyme catalyses DNA(n) + a 2'-deoxyribonucleoside 5'-triphosphate = DNA(n+1) + diphosphate. Its function is as follows. DNA polymerase involved in damage-induced mutagenesis and translesion synthesis (TLS). It is not the major replicative DNA polymerase. The polypeptide is Error-prone DNA polymerase (Vibrio vulnificus (strain YJ016)).